We begin with the raw amino-acid sequence, 168 residues long: Photosystem I assembly protein Ycf3 (168 aa).

TPR repeat units lie at residues A35–P68, S72–L105, and G120–N153.

This sequence belongs to the Ycf3 family.

It localises to the plastid. The protein resides in the chloroplast thylakoid membrane. In terms of biological role, essential for the assembly of the photosystem I (PSI) complex. May act as a chaperone-like factor to guide the assembly of the PSI subunits. The protein is Photosystem I assembly protein Ycf3 of Nicotiana sylvestris (Wood tobacco).